Reading from the N-terminus, the 326-residue chain is tRNA-modifying protein YgfZ (326 aa).

Folate-binding residues include Trp-27 and Trp-189.

Belongs to the tRNA-modifying YgfZ family.

Its subcellular location is the cytoplasm. Folate-binding protein involved in regulating the level of ATP-DnaA and in the modification of some tRNAs. It is probably a key factor in regulatory networks that act via tRNA modification, such as initiation of chromosomal replication. This Salmonella typhimurium (strain LT2 / SGSC1412 / ATCC 700720) protein is tRNA-modifying protein YgfZ.